The sequence spans 141 residues: UPF0310 protein Mflv_0785 (141 aa).

The protein belongs to the UPF0310 family.

The polypeptide is UPF0310 protein Mflv_0785 (Mycolicibacterium gilvum (strain PYR-GCK) (Mycobacterium gilvum (strain PYR-GCK))).